Reading from the N-terminus, the 679-residue chain is Protein polyglycylase TTLL10 (679 aa).

Positions 1–15 (MPLHPPARRPHGHRR) are enriched in basic residues. 3 disordered regions span residues 1-33 (MPLH…GRLS), 49-77 (GHRA…LMPA), and 96-124 (VSFK…RMGS). Positions 18–30 (SEAQTEATTQDTG) are enriched in polar residues. Residues 96 to 110 (VSFKRPKRSRTHQSH) are compositionally biased toward basic residues. The 372-residue stretch at 172-543 (QGPFFYIGGT…TCQKSLHSQK (372 aa)) folds into the TTL domain. Residues Lys304, 310–311 (QG), 353–356 (QRYV), 366–368 (KFD), and 409–410 (TN) contribute to the ATP site. Residue Gln310 participates in a protein binding. Asp489, Glu502, and Asn504 together coordinate Mg(2+). A disordered region spans residues 605 to 679 (DRPAARKSMS…EQRSTSHRGS (75 aa)).

Mg(2+) is required as a cofactor.

Its subcellular location is the cytoplasm. It is found in the cytoskeleton. The protein localises to the cell projection. It localises to the cilium. The protein resides in the cilium axoneme. The enzyme catalyses (glycyl)(n)-glycyl-L-glutamyl-[protein] + glycine + ATP = (glycyl)(n+1)-glycyl-L-glutamyl-[protein] + ADP + phosphate + H(+). Its function is as follows. Polyglycylase which modifies both tubulin and non-tubulin proteins, generating polyglycine side chains of variable lengths on the gamma-carboxyl groups of specific glutamate residues of target proteins. Involved in the elongation step rather than the initiation step of the polyglycylation reaction. Polyglycylates alpha-tubulin and beta-tubulin. Polyglycylates non-tubulin proteins such as nucleosome assembly protein NAP1. The polypeptide is Protein polyglycylase TTLL10 (Rattus norvegicus (Rat)).